We begin with the raw amino-acid sequence, 410 residues long: MAVINVTSEIGKLKKVLLHRPGKELLNLTPDKLDELLFDDIPFLKMAQKEHDAFADILSKNGVEVVYLEDLAAEAVSQSAEIREKFIKQYINEADIYSEYYQKMIYDFLNAIKDPKELILKTMEGVNANEIPFKNTHSLSHYVLDSGSMVINPMPNLYFTRDPFACIGNGVSLNKMYSVTRCRETIYGEYIFDHHPEYAGKVNRFYNRYDAPSIEGGDILNIGKDVLAIGLSQRTSANAIDSIANNIFDNETSPIKTVLAFQIPAIRAFMHLDTVFTQIDFDKFTIHPGILGPLRVFEITRGTKKGELNVKQIDSTLEKVLEKYTGAGKIELIQCAGGDKIAAEREQWNDGSNTLCISPGTIVVYERNDVTNEILNKKGLKVLEMPCGELSRGRGGPRCMSMPLLREDIR.

Cysteine 399 serves as the catalytic Amidino-cysteine intermediate.

This sequence belongs to the arginine deiminase family.

Its subcellular location is the cytoplasm. It carries out the reaction L-arginine + H2O = L-citrulline + NH4(+). It functions in the pathway amino-acid degradation; L-arginine degradation via ADI pathway; carbamoyl phosphate from L-arginine: step 1/2. The polypeptide is Arginine deiminase (Treponema denticola (strain ATCC 35405 / DSM 14222 / CIP 103919 / JCM 8153 / KCTC 15104)).